The chain runs to 318 residues: MALKELRIGTRASQLALWQANWVKSELEKRYPDMTVTLTKIKTIGDKILDVPLAQVGGKGLFVKEIEEAMLRGEIDIAVHSMKDVPTEFPEGLGLYCITEREDPRDAVISNGVKFADLPQGARIGTSALRRQAQLLKVRPDLEMVIIRGNVQTRMDKLKTEGLDAVILAAAGLNRLGFADQITEMLPTDLSLPAIGQGALGIECNLSNQDVKDAISFFNSPDTSRAVRAERALLWRCEGGCQVPIAAFGEVTGDQLKLTGFIASVDGKVSVKGVVTGPADDCEKLGVKLAEQLLSEGGHAILAEVYQREVSREKEIPV.

Residue C241 is modified to S-(dipyrrolylmethanemethyl)cysteine.

The protein belongs to the HMBS family. In terms of assembly, monomer. It depends on dipyrromethane as a cofactor.

It carries out the reaction 4 porphobilinogen + H2O = hydroxymethylbilane + 4 NH4(+). The protein operates within porphyrin-containing compound metabolism; protoporphyrin-IX biosynthesis; coproporphyrinogen-III from 5-aminolevulinate: step 2/4. Its function is as follows. Tetrapolymerization of the monopyrrole PBG into the hydroxymethylbilane pre-uroporphyrinogen in several discrete steps. This is Porphobilinogen deaminase from Citrifermentans bemidjiense (strain ATCC BAA-1014 / DSM 16622 / JCM 12645 / Bem) (Geobacter bemidjiensis).